Consider the following 804-residue polypeptide: Phenylalanine--tRNA ligase beta subunit (804 aa).

The region spanning 40-155 is the tRNA-binding domain; it reads GEGIKGVVIG…NDAETGSDAL (116 aa). A B5 domain is found at 409 to 484; the sequence is IEANNIHVSA…RLYGYDNIPS (76 aa). Residues aspartate 462, aspartate 468, glutamate 471, and glutamate 472 each coordinate Mg(2+). The FDX-ACB domain occupies 710 to 803; that stretch reads PKYPSVTRDI…LEDTYQAVLR (94 aa).

The protein belongs to the phenylalanyl-tRNA synthetase beta subunit family. Type 1 subfamily. In terms of assembly, tetramer of two alpha and two beta subunits. It depends on Mg(2+) as a cofactor.

It localises to the cytoplasm. The enzyme catalyses tRNA(Phe) + L-phenylalanine + ATP = L-phenylalanyl-tRNA(Phe) + AMP + diphosphate + H(+). The polypeptide is Phenylalanine--tRNA ligase beta subunit (pheT) (Bacillus subtilis (strain 168)).